We begin with the raw amino-acid sequence, 184 residues long: Ribosome-recycling factor (184 aa).

Belongs to the RRF family.

Its subcellular location is the cytoplasm. Its function is as follows. Responsible for the release of ribosomes from messenger RNA at the termination of protein biosynthesis. May increase the efficiency of translation by recycling ribosomes from one round of translation to another. The polypeptide is Ribosome-recycling factor (Psychrobacter sp. (strain PRwf-1)).